The following is a 372-amino-acid chain: Peptide chain release factor 2 (372 aa).

At Q253 the chain carries N5-methylglutamine.

The protein belongs to the prokaryotic/mitochondrial release factor family. Methylated by PrmC. Methylation increases the termination efficiency of RF2.

It is found in the cytoplasm. Peptide chain release factor 2 directs the termination of translation in response to the peptide chain termination codons UGA and UAA. The polypeptide is Peptide chain release factor 2 (Nocardia farcinica (strain IFM 10152)).